A 671-amino-acid polypeptide reads, in one-letter code: DEAD-box ATP-dependent RNA helicase 7 (671 aa).

Residues 1–84 are disordered; it reads MPSLMLSDKK…EKKKSSKKVK (84 aa). Over residues 26–41 the composition is skewed to basic and acidic residues; that stretch reads LDSKKGKKEQKLKLSD. S40 and S42 each carry phosphoserine. Over residues 50-60 the composition is skewed to basic residues; the sequence is KKSKKKDKKRK. A Q motif motif is present at residues 96–124; that stretch reads NAVSKFRISAPLREKLKANGIEALFPIQA. Residues 127-309 form the Helicase ATP-binding domain; sequence FDMVLDGADL…NRFLKRDQKT (183 aa). 140–147 is a binding site for ATP; it reads ARTGQGKT. Residues 255-258 carry the DEAD box motif; it reads DEAD. The Helicase C-terminal domain occupies 339-479; sequence LIPDIISCYS…HLAAPQPDEI (141 aa). Residues 627-671 form a disordered region; that stretch reads EREPLPQKRFGGGGRGNRFGGGGGNRFGGGGGRGRGGSGGRGQRY. Residues 636–671 show a composition bias toward gly residues; that stretch reads FGGGGRGNRFGGGGGNRFGGGGGRGRGGSGGRGQRY.

This sequence belongs to the DEAD box helicase family. DDX21/DDX50 subfamily.

Its subcellular location is the nucleus. The catalysed reaction is ATP + H2O = ADP + phosphate + H(+). This is DEAD-box ATP-dependent RNA helicase 7 (RH7) from Arabidopsis thaliana (Mouse-ear cress).